Reading from the N-terminus, the 264-residue chain is Propanediol uptake facilitator PduF (264 aa).

Transmembrane regions (helical) follow at residues 10-30 (GAEF…LSAL) and 42-62 (ICII…GISG). The NPA 1 motif lies at 66-68 (NPA). The next 3 helical transmembrane spans lie at 84-104 (VLPY…LAYV), 143-163 (VWQA…MIMA), and 179-199 (LLIG…TGFA). The NPA 2 motif lies at 201–203 (NPA). The chain crosses the membrane as a helical span at residues 228–248 (IPYFIVPIVAPVIGACAGAAI).

The protein belongs to the MIP/aquaporin (TC 1.A.8) family.

It localises to the cell inner membrane. Probably facilitates diffusion of 1,2-propanediol (1,2-PD) into the cell. Modeling suggests active transport of 1,2-PD is required at low extracellular concentrations to allow maximal growth and saturation of PduP/PduQ within the bacterial microcompartment (BMC); this protein may be the cellular transporter. Its function is as follows. The 1,2-PD-specific bacterial microcompartment (BMC) concentrates low levels of 1,2-PD catabolic enzymes, concentrates volatile reaction intermediates thus enhancing pathway flux and keeps the level of toxic, mutagenic propionaldehyde low. In Salmonella typhimurium (strain LT2 / SGSC1412 / ATCC 700720), this protein is Propanediol uptake facilitator PduF.